Reading from the N-terminus, the 259-residue chain is Phosphate import ATP-binding protein PstB (259 aa).

One can recognise an ABC transporter domain in the interval 13 to 254 (IQVRDLNFYY…PAQRQTEDYI (242 aa)). 45 to 52 (GPSGCGKS) is a binding site for ATP.

This sequence belongs to the ABC transporter superfamily. Phosphate importer (TC 3.A.1.7) family. As to quaternary structure, the complex is composed of two ATP-binding proteins (PstB), two transmembrane proteins (PstC and PstA) and a solute-binding protein (PstS).

The protein localises to the cell inner membrane. It carries out the reaction phosphate(out) + ATP + H2O = ADP + 2 phosphate(in) + H(+). In terms of biological role, part of the ABC transporter complex PstSACB involved in phosphate import. Responsible for energy coupling to the transport system. The polypeptide is Phosphate import ATP-binding protein PstB (Edwardsiella tarda).